A 449-amino-acid polypeptide reads, in one-letter code: UDP-N-acetylmuramate--L-alanine ligase (449 aa).

121-127 contributes to the ATP binding site; the sequence is GAHGKSS.

The protein belongs to the MurCDEF family.

The protein localises to the cytoplasm. The enzyme catalyses UDP-N-acetyl-alpha-D-muramate + L-alanine + ATP = UDP-N-acetyl-alpha-D-muramoyl-L-alanine + ADP + phosphate + H(+). The protein operates within cell wall biogenesis; peptidoglycan biosynthesis. Functionally, cell wall formation. The chain is UDP-N-acetylmuramate--L-alanine ligase from Helicobacter pylori (strain HPAG1).